The following is an 85-amino-acid chain: Large ribosomal subunit protein bL31B (85 aa).

It belongs to the bacterial ribosomal protein bL31 family. Type B subfamily. In terms of assembly, part of the 50S ribosomal subunit.

In Clavibacter michiganensis subsp. michiganensis (strain NCPPB 382), this protein is Large ribosomal subunit protein bL31B.